The following is a 64-amino-acid chain: Large ribosomal subunit protein bL35 (64 aa).

Residues 1–15 show a composition bias toward basic residues; it reads MPKSKTHSGTAKRFK. The tract at residues 1–23 is disordered; sequence MPKSKTHSGTAKRFKVSGSGKIL.

Belongs to the bacterial ribosomal protein bL35 family.

This is Large ribosomal subunit protein bL35 from Rhodococcus jostii (strain RHA1).